The sequence spans 141 residues: Mite group 2 allergen Tyr p 2 (141 aa).

The signal sequence occupies residues 1 to 15 (MKFLILFALVAVAAA). Cystine bridges form between Cys-23/Cys-132, Cys-36/Cys-41, and Cys-87/Cys-92. N-linked (GlcNAc...) asparagine glycosylation occurs at Asn-103.

It belongs to the NPC2 family.

It is found in the secreted. This chain is Mite group 2 allergen Tyr p 2, found in Tyrophagus putrescentiae (Mold mite).